We begin with the raw amino-acid sequence, 305 residues long: NAD-dependent protein deacylase SIR4 (305 aa).

The N-terminal 10 residues, 1–10 (MSAQVMHNRV), are a transit peptide targeting the mitochondrion. The Deacetylase sirtuin-type domain occupies 11–305 (MGTVKDSASK…VLEELASTIR (295 aa)). NAD(+) is bound by residues 37–57 (GAGV…GIYS) and 118–121 (QNVD). H139 serves as the catalytic Proton acceptor. Zn(2+)-binding residues include C147, C150, C209, and C212. Residues 249-251 (GSS), 275-277 (NLG), and S293 each bind NAD(+).

This sequence belongs to the sirtuin family. Class II subfamily. It depends on Zn(2+) as a cofactor.

The protein localises to the mitochondrion matrix. The enzyme catalyses N(6)-acetyl-L-lysyl-[protein] + NAD(+) + H2O = 2''-O-acetyl-ADP-D-ribose + nicotinamide + L-lysyl-[protein]. Functionally, NAD-dependent protein deacylase. Catalyzes the NAD-dependent hydrolysis of acyl groups from lysine residues. The protein is NAD-dependent protein deacylase SIR4 of Batrachochytrium dendrobatidis (strain JAM81 / FGSC 10211) (Frog chytrid fungus).